The primary structure comprises 357 residues: tRNA/tmRNA (uracil-C(5))-methyltransferase (357 aa).

Positions 180, 209, 214, 230, and 290 each coordinate S-adenosyl-L-methionine. Cys315 (nucleophile) is an active-site residue. Glu349 (proton acceptor) is an active-site residue.

It belongs to the class I-like SAM-binding methyltransferase superfamily. RNA M5U methyltransferase family. TrmA subfamily.

The catalysed reaction is uridine(54) in tRNA + S-adenosyl-L-methionine = 5-methyluridine(54) in tRNA + S-adenosyl-L-homocysteine + H(+). The enzyme catalyses uridine(341) in tmRNA + S-adenosyl-L-methionine = 5-methyluridine(341) in tmRNA + S-adenosyl-L-homocysteine + H(+). In terms of biological role, dual-specificity methyltransferase that catalyzes the formation of 5-methyluridine at position 54 (m5U54) in all tRNAs, and that of position 341 (m5U341) in tmRNA (transfer-mRNA). The polypeptide is tRNA/tmRNA (uracil-C(5))-methyltransferase (Campylobacter jejuni (strain RM1221)).